The chain runs to 221 residues: Transmembrane emp24 domain-containing protein 3 (221 aa).

Residues 1-30 (MGNEVPRASSFQMLMLLLLLLLLRAERLRG) form the signal peptide. The Lumenal portion of the chain corresponds to 31–184 (AELTFELPDN…RAEDLNSRVS (154 aa)). The 83-residue stretch at 42–124 (KQCFHEEVEQ…HKTVYFDFQV (83 aa)) folds into the GOLD domain. Arg-103 bears the Dimethylated arginine mark. Residues 185-205 (YWSVGETIALFVVSFSQVLLL) form a helical membrane-spanning segment. Over 206 to 221 (KSFFTEKRPINRAVHS) the chain is Cytoplasmic. Positions 208–209 (FF) match the COPII vesicle coat-binding motif. The short motif at 208-221 (FFTEKRPINRAVHS) is the COPI vesicle coat-binding element.

It belongs to the EMP24/GP25L family. Monomer in endoplasmic reticulum, endoplasmic reticulum-Golgi intermediate compartment and cis-Golgi network. Interacts (via C-terminus) with COPG1; the interaction involves dimeric TMED3; however, there are conflicting reports on the interaction. Interacts with GORASP1 and GORASP2.

It is found in the endoplasmic reticulum-Golgi intermediate compartment membrane. Its subcellular location is the golgi apparatus. The protein resides in the cis-Golgi network membrane. It localises to the golgi stack membrane. The protein localises to the endoplasmic reticulum membrane. It is found in the cytoplasmic vesicle. Its subcellular location is the COPI-coated vesicle membrane. Functionally, potential role in vesicular protein trafficking, mainly in the early secretory pathway. Contributes to the coupled localization of TMED2 and TMED10 in the cis-Golgi network. The sequence is that of Transmembrane emp24 domain-containing protein 3 (Tmed3) from Rattus norvegicus (Rat).